Reading from the N-terminus, the 127-residue chain is Major sperm protein 152 (127 aa).

The residue at position 2 (T2) is an N-acetylthreonine. Residues 9 to 126 (DIQTQPGTKI…RRKNLPIEYN (118 aa)) form the MSP domain.

In terms of tissue distribution, sperm.

It is found in the cell projection. It localises to the pseudopodium. Its subcellular location is the cytoplasm. The protein resides in the cytoskeleton. Its function is as follows. Central component in molecular interactions underlying sperm crawling. Forms an extensive filament system that extends from sperm villipoda, along the leading edge of the pseudopod. This is Major sperm protein 152 (msp-152) from Caenorhabditis elegans.